We begin with the raw amino-acid sequence, 1318 residues long: Uromodulin-like 1 (1318 aa).

A signal peptide spans 1–21 (MLRTSGLALLALVSAVGPSQA). At 22–1272 (SGFTEKGLSL…HAEAGLGAGY (1251 aa)) the chain is on the extracellular side. In terms of domain architecture, EMI spans 33–106 (GYQLCSHRVT…YEQLGLYCVL (74 aa)). 3 disulfides stabilise this stretch: cysteine 37–cysteine 94, cysteine 61–cysteine 70, and cysteine 93–cysteine 104. Asparagine 89 is a glycosylation site (N-linked (GlcNAc...) asparagine). Asparagine 109 carries an N-linked (GlcNAc...) asparagine glycan. A WAP domain is found at 114 to 158 (FTSRPGACPAEGPEPSTSPCSLDIDCPGLEKCCPWSGGRYCMAPA). Asparagine 172 carries an N-linked (GlcNAc...) asparagine glycan. In terms of domain architecture, EGF-like 1; calcium-binding spans 264–313 (DVNECFYEELNACSGRELCANLEGSYWCVCHQEAPATSPRKLNLEWEDCP). In terms of domain architecture, Fibronectin type-III 1 spans 314-398 (PVSDYVVLNV…TTLTIKTNAQ (85 aa)). N-linked (GlcNAc...) asparagine glycosylation is found at asparagine 322, asparagine 335, and asparagine 417. Positions 396-510 (NAQVFEVTIK…QGTRVQDWDE (115 aa)) constitute an SEA 1 domain. In terms of domain architecture, EGF-like 2; calcium-binding spans 507–552 (DWDECVDSAEHDCSPAAWCINLEGSYTCQCRTTRDATPSRAGRACE). Cystine bridges form between cysteine 511–cysteine 525, cysteine 519–cysteine 534, and cysteine 536–cysteine 551. An N-linked (GlcNAc...) asparagine glycan is attached at asparagine 585. Positions 593–655 (GYPQGTPAAG…PSPTEDPTGH (63 aa)) are disordered. The 90-residue stretch at 702–791 (VPVSIGRIMV…HLKVRTAARK (90 aa)) folds into the Fibronectin type-III 2 domain. A glycan (N-linked (GlcNAc...) asparagine) is linked at asparagine 713. In terms of domain architecture, SEA 2 spans 788–900 (AARKLIGKVR…GDTFIQDYDE (113 aa)). The EGF-like 3; calcium-binding domain occupies 897–938 (DYDECERKEDDCVPGTSCRNTLGSFTCSCEGGAPDFPVEYSE). Intrachain disulfides connect cysteine 901/cysteine 914 and cysteine 908/cysteine 923. The tract at residues 938 to 957 (ERPCEGDSPGNETWATSPER) is disordered. 2 N-linked (GlcNAc...) asparagine glycosylation sites follow: asparagine 984 and asparagine 1050. The region spanning 992–1235 (LCEIEKVVVA…ATCKINCNNF (244 aa)) is the ZP domain. A disulfide bridge connects residues cysteine 1157 and cysteine 1215. The chain crosses the membrane as a helical span at residues 1273–1293 (VVLIVVAIFVLVAGTATLLIV). The Cytoplasmic segment spans residues 1294 to 1318 (RYQRMNGRYNFKIQSNNFSYQVFYE).

As to expression, isoform 4 is expressed at low level in kidney, testis and fetal thymus. Isoform 3 is expressed at low level in prostate, testis and fetal thymus.

The protein resides in the cell membrane. It is found in the cytoplasm. The sequence is that of Uromodulin-like 1 (UMODL1) from Homo sapiens (Human).